Reading from the N-terminus, the 195-residue chain is Group XIIB secretory phospholipase A2-like protein (195 aa).

An N-terminal signal peptide occupies residues 1–19 (MKLLCGFFLLWLGLVGNLA). Ca(2+)-binding residues include S89, Y91, L93, and D116.

Belongs to the phospholipase A2 family. It depends on Ca(2+) as a cofactor.

The protein resides in the secreted. Its function is as follows. Not known; does not seem to have catalytic activity. The sequence is that of Group XIIB secretory phospholipase A2-like protein (Pla2g12b) from Mus musculus (Mouse).